We begin with the raw amino-acid sequence, 401 residues long: S-adenosylmethionine synthase (401 aa).

135–140 (GHGSGD) contributes to the ATP binding site.

It belongs to the AdoMet synthase 2 family. The cofactor is Mg(2+).

The catalysed reaction is L-methionine + ATP + H2O = S-adenosyl-L-methionine + phosphate + diphosphate. It participates in amino-acid biosynthesis; S-adenosyl-L-methionine biosynthesis; S-adenosyl-L-methionine from L-methionine: step 1/1. In terms of biological role, catalyzes the formation of S-adenosylmethionine from methionine and ATP. This Methanothermobacter thermautotrophicus (strain ATCC 29096 / DSM 1053 / JCM 10044 / NBRC 100330 / Delta H) (Methanobacterium thermoautotrophicum) protein is S-adenosylmethionine synthase (mat).